The chain runs to 134 residues: Ribonuclease P protein component (134 aa).

The protein belongs to the RnpA family. As to quaternary structure, consists of a catalytic RNA component (M1 or rnpB) and a protein subunit.

The enzyme catalyses Endonucleolytic cleavage of RNA, removing 5'-extranucleotides from tRNA precursor.. In terms of biological role, RNaseP catalyzes the removal of the 5'-leader sequence from pre-tRNA to produce the mature 5'-terminus. It can also cleave other RNA substrates such as 4.5S RNA. The protein component plays an auxiliary but essential role in vivo by binding to the 5'-leader sequence and broadening the substrate specificity of the ribozyme. In Pseudomonas putida (strain ATCC 700007 / DSM 6899 / JCM 31910 / BCRC 17059 / LMG 24140 / F1), this protein is Ribonuclease P protein component.